Here is a 225-residue protein sequence, read N- to C-terminus: MAEKRAEKRKFNTEAWEPKTQIGRMVKEGTISDISYIMDKGLPLLEPEIVDALLPDLEEQVLDVKLVQRMHKSGRRARYRATVVVGNKNGYVGVGMGKSKEVGPAIRKAIAHAKLSLIKVRVGCGSWECGCGSPHSIPFTAKGACGSVKVELLPAPRGVGLVAGNVAKAVLGLAGVKDAWTKTFGDTRTTYNFAEATFDALNNLNFVRCLPNQKEKLGLTEGRVL.

The S5 DRBM domain maps to 57-120 (LEEQVLDVKL…AHAKLSLIKV (64 aa)).

This sequence belongs to the universal ribosomal protein uS5 family. In terms of assembly, part of the 30S ribosomal subunit. Contacts protein S4.

With S4 and S12 plays an important role in translational accuracy. In Methanococcus maripaludis (strain DSM 14266 / JCM 13030 / NBRC 101832 / S2 / LL), this protein is Small ribosomal subunit protein uS5.